Reading from the N-terminus, the 368-residue chain is Protein RecA (368 aa).

72-79 (GNESSGKT) lines the ATP pocket.

This sequence belongs to the RecA family.

It localises to the cytoplasm. Can catalyze the hydrolysis of ATP in the presence of single-stranded DNA, the ATP-dependent uptake of single-stranded DNA by duplex DNA, and the ATP-dependent hybridization of homologous single-stranded DNAs. It interacts with LexA causing its activation and leading to its autocatalytic cleavage. The sequence is that of Protein RecA from Petrotoga mobilis (strain DSM 10674 / SJ95).